A 66-amino-acid polypeptide reads, in one-letter code: Large ribosomal subunit protein bL33c (66 aa).

This sequence belongs to the bacterial ribosomal protein bL33 family.

It localises to the plastid. The protein resides in the chloroplast. The chain is Large ribosomal subunit protein bL33c from Vitis vinifera (Grape).